Here is a 230-residue protein sequence, read N- to C-terminus: RING finger protein 141 (230 aa).

The RING-type zinc finger occupies 154 to 191 (ECCICMDGRVDLILPCAHSFCQKCIDKWSDRHRSCPVC).

The chain is RING finger protein 141 (RNF141) from Gallus gallus (Chicken).